Here is a 602-residue protein sequence, read N- to C-terminus: Elongation factor 4 (602 aa).

One can recognise a tr-type G domain in the interval 8–190 (DLIRNFSIVA…AIVHRLPPPK (183 aa)). GTP-binding positions include 20–25 (DHGKST) and 137–140 (NKID).

This sequence belongs to the TRAFAC class translation factor GTPase superfamily. Classic translation factor GTPase family. LepA subfamily.

Its subcellular location is the cell inner membrane. The enzyme catalyses GTP + H2O = GDP + phosphate + H(+). Its function is as follows. Required for accurate and efficient protein synthesis under certain stress conditions. May act as a fidelity factor of the translation reaction, by catalyzing a one-codon backward translocation of tRNAs on improperly translocated ribosomes. Back-translocation proceeds from a post-translocation (POST) complex to a pre-translocation (PRE) complex, thus giving elongation factor G a second chance to translocate the tRNAs correctly. Binds to ribosomes in a GTP-dependent manner. The polypeptide is Elongation factor 4 (Cereibacter sphaeroides (strain ATCC 17029 / ATH 2.4.9) (Rhodobacter sphaeroides)).